The following is a 395-amino-acid chain: Thyrotropin-releasing hormone receptor (395 aa).

Residues M1–T30 are Extracellular-facing. N3 and N10 each carry an N-linked (GlcNAc...) asparagine glycan. A helical transmembrane segment spans residues I31 to L53. Topologically, residues R54–N63 are cytoplasmic. A helical transmembrane segment spans residues C64–I85. Residues T86–L101 are Extracellular-facing. A disulfide bridge connects residues C100 and C181. The chain crosses the membrane as a helical span at residues C102 to I123. The Cytoplasmic portion of the chain corresponds to E124 to K146. The helical transmembrane segment at I147–I170 threads the bilayer. At A171–M195 the chain is on the extracellular side. The chain crosses the membrane as a helical span at residues M196 to A217. Topologically, residues R218–K268 are cytoplasmic. A helical transmembrane segment spans residues M269 to V290. Residues N291 to F298 lie on the Extracellular side of the membrane. The chain crosses the membrane as a helical span at residues Q299–I321. The Cytoplasmic portion of the chain corresponds to Y322 to A395.

The protein belongs to the G-protein coupled receptor 1 family.

It localises to the cell membrane. In terms of biological role, receptor for thyrotropin-releasing hormone (TRH). Upon ligand binding, this G-protein-coupled receptor triggers activation of the phosphatidylinositol (IP3)-calcium-protein kinase C (PKC) pathway. This chain is Thyrotropin-releasing hormone receptor (TRHR), found in Gallus gallus (Chicken).